We begin with the raw amino-acid sequence, 110 residues long: tRNA-binding protein YgjH (110 aa).

Residues 8-110 enclose the tRNA-binding domain; sequence DFARLEMRVG…RMMPAGVRVV (103 aa).

In terms of assembly, homodimer.

In Escherichia coli (strain K12), this protein is tRNA-binding protein YgjH (ygjH).